Reading from the N-terminus, the 192-residue chain is Leucine-rich repeat-containing protein 51 (192 aa).

LRR repeat units lie at residues 50–71 (MTQSLWLNNNVLTDLRDFNHAV), 80–101 (NLAWIDLSFNDLTSIDPVLTTF), and 103–124 (NLSVLYLHGNSIQRLGEVNKLA). The LRRCT domain maps to 137-175 (NPIEEEKGYRQYVLCTLPHITTFDFSGVTKADRTTAEVW).

It localises to the cytoplasm. The protein is Leucine-rich repeat-containing protein 51 of Bos taurus (Bovine).